The sequence spans 95 residues: Large ribosomal subunit protein uL23 (95 aa).

Belongs to the universal ribosomal protein uL23 family. In terms of assembly, part of the 50S ribosomal subunit. Contacts protein L29, and trigger factor when it is bound to the ribosome.

One of the early assembly proteins it binds 23S rRNA. One of the proteins that surrounds the polypeptide exit tunnel on the outside of the ribosome. Forms the main docking site for trigger factor binding to the ribosome. The protein is Large ribosomal subunit protein uL23 of Desulfitobacterium hafniense (strain Y51).